A 428-amino-acid chain; its full sequence is Histidinol dehydrogenase (428 aa).

Substrate contacts are provided by S234, Q256, and H259. Residues Q256 and H259 each coordinate Zn(2+). Residues E323 and H324 each act as proton acceptor in the active site. H324, D357, E411, and H416 together coordinate substrate. D357 lines the Zn(2+) pocket. H416 contributes to the Zn(2+) binding site.

This sequence belongs to the histidinol dehydrogenase family. Zn(2+) is required as a cofactor.

The catalysed reaction is L-histidinol + 2 NAD(+) + H2O = L-histidine + 2 NADH + 3 H(+). The protein operates within amino-acid biosynthesis; L-histidine biosynthesis; L-histidine from 5-phospho-alpha-D-ribose 1-diphosphate: step 9/9. Functionally, catalyzes the sequential NAD-dependent oxidations of L-histidinol to L-histidinaldehyde and then to L-histidine. The protein is Histidinol dehydrogenase of Campylobacter jejuni subsp. jejuni serotype O:2 (strain ATCC 700819 / NCTC 11168).